The chain runs to 309 residues: Tyrosine recombinase XerD (309 aa).

The Core-binding (CB) domain maps to 3–88 (MRASLAIENF…ALRQFFRFLY (86 aa)). One can recognise a Tyr recombinase domain in the interval 109-302 (PLPKIMSVEN…LEERLHKLVS (194 aa)). Residues Arg158, Lys182, His254, Arg257, and His280 contribute to the active site. The active-site O-(3'-phospho-DNA)-tyrosine intermediate is the Tyr289.

Belongs to the 'phage' integrase family. XerD subfamily. Forms a cyclic heterotetrameric complex composed of two molecules of XerC and two molecules of XerD.

Its subcellular location is the cytoplasm. Functionally, site-specific tyrosine recombinase, which acts by catalyzing the cutting and rejoining of the recombining DNA molecules. The XerC-XerD complex is essential to convert dimers of the bacterial chromosome into monomers to permit their segregation at cell division. It also contributes to the segregational stability of plasmids. This chain is Tyrosine recombinase XerD, found in Brucella melitensis biotype 1 (strain ATCC 23456 / CCUG 17765 / NCTC 10094 / 16M).